The chain runs to 447 residues: Methylenetetrahydrofolate--tRNA-(uracil-5-)-methyltransferase TrmFO (447 aa).

Position 10–15 (10–15 (GAGLAG)) interacts with FAD.

It belongs to the MnmG family. TrmFO subfamily. FAD is required as a cofactor.

The protein resides in the cytoplasm. The catalysed reaction is uridine(54) in tRNA + (6R)-5,10-methylene-5,6,7,8-tetrahydrofolate + NADH + H(+) = 5-methyluridine(54) in tRNA + (6S)-5,6,7,8-tetrahydrofolate + NAD(+). It catalyses the reaction uridine(54) in tRNA + (6R)-5,10-methylene-5,6,7,8-tetrahydrofolate + NADPH + H(+) = 5-methyluridine(54) in tRNA + (6S)-5,6,7,8-tetrahydrofolate + NADP(+). Catalyzes the folate-dependent formation of 5-methyl-uridine at position 54 (M-5-U54) in all tRNAs. The sequence is that of Methylenetetrahydrofolate--tRNA-(uracil-5-)-methyltransferase TrmFO from Symbiobacterium thermophilum (strain DSM 24528 / JCM 14929 / IAM 14863 / T).